Here is a 264-residue protein sequence, read N- to C-terminus: Catenin delta-2 (264 aa).

ARM repeat units lie at residues 20–59 (NKIK…NLVY), 64–104 (DDNK…NLSS), 120–162 (LTNA…NVSS), and 166–211 (EARR…NLSY). The segment at 238–264 (GKDAESSGCWGKKKKKKKSQDQWDGVG) is disordered.

Belongs to the beta-catenin family. As to quaternary structure, binds to E-cadherin at a juxtamembrane site within the cytoplasmic domain. Binds to PSEN1. Interacts with ZBTB33. Interacts with ARHGEF28. Interacts (via the extreme C-terminus) with FRMPD2 (via the PDZ 2 domain). Interacts with PDZD2. Interacts with CDK5. Interacts with CTNBB1. Interacts with GSK3A and GSK3B. Interacts with DNM2. Interacts with CCDC85B. O-glycosylated. Post-translationally, phosphorylated by CDK5. Phosphorylated by GSK3B. In terms of tissue distribution, predominantly expressed in brain; accumulates in cortical neurons (at protein level).

It is found in the nucleus. Its subcellular location is the cell junction. The protein localises to the adherens junction. The protein resides in the cell projection. It localises to the dendrite. It is found in the perikaryon. Its function is as follows. Has a critical role in neuronal development, particularly in the formation and/or maintenance of dendritic spines and synapses. Involved in the regulation of canonical Wnt signaling. It probably acts on beta-catenin turnover, facilitating beta-catenin interaction with GSK3B, phosphorylation, ubiquitination and degradation. May be involved in neuronal cell adhesion and tissue morphogenesis and integrity by regulating adhesion molecules. Functions as a transcriptional activator when bound to ZBTB33. This chain is Catenin delta-2 (Ctnnd2), found in Rattus norvegicus (Rat).